The primary structure comprises 152 residues: Lipoprotein signal peptidase (152 aa).

Helical transmembrane passes span 5–25, 61–81, and 84–104; these read LFVL…FWIV, WFFV…LATH, and LNIW…GNFI. Active-site residues include D114 and D130. The helical transmembrane segment at 125 to 145 threads the bilayer; sequence IFNVADSYLTVGVILLLICLW.

Belongs to the peptidase A8 family.

The protein localises to the cell membrane. It carries out the reaction Release of signal peptides from bacterial membrane prolipoproteins. Hydrolyzes -Xaa-Yaa-Zaa-|-(S,diacylglyceryl)Cys-, in which Xaa is hydrophobic (preferably Leu), and Yaa (Ala or Ser) and Zaa (Gly or Ala) have small, neutral side chains.. Its pathway is protein modification; lipoprotein biosynthesis (signal peptide cleavage). Functionally, this protein specifically catalyzes the removal of signal peptides from prolipoproteins. The chain is Lipoprotein signal peptidase from Streptococcus pyogenes serotype M1.